The following is a 456-amino-acid chain: Bifunctional protein GlmU (456 aa).

The tract at residues 1–228 (MTLPLHVLIL…PQDVEGANDP (228 aa)) is pyrophosphorylase. UDP-N-acetyl-alpha-D-glucosamine-binding positions include 10–13 (LAAG), Lys-24, Gln-76, 81–82 (GT), 103–105 (YGD), Gly-138, Glu-153, Asn-168, and Asn-226. Asp-105 serves as a coordination point for Mg(2+). Asn-226 provides a ligand contact to Mg(2+). Positions 229 to 249 (WQLAQLERAWQLRAARTLCLQ) are linker. Residues 250-456 (GVRMADPARV…GWKRPTKKSP (207 aa)) form an N-acetyltransferase region. 2 residues coordinate UDP-N-acetyl-alpha-D-glucosamine: Arg-332 and Lys-350. Catalysis depends on His-362, which acts as the Proton acceptor. Residues Tyr-365 and Asn-376 each contribute to the UDP-N-acetyl-alpha-D-glucosamine site. Residues Ala-379, 385–386 (NY), Ser-404, Ala-422, and Arg-439 contribute to the acetyl-CoA site.

It in the N-terminal section; belongs to the N-acetylglucosamine-1-phosphate uridyltransferase family. The protein in the C-terminal section; belongs to the transferase hexapeptide repeat family. In terms of assembly, homotrimer. Mg(2+) is required as a cofactor.

It localises to the cytoplasm. It carries out the reaction alpha-D-glucosamine 1-phosphate + acetyl-CoA = N-acetyl-alpha-D-glucosamine 1-phosphate + CoA + H(+). The enzyme catalyses N-acetyl-alpha-D-glucosamine 1-phosphate + UTP + H(+) = UDP-N-acetyl-alpha-D-glucosamine + diphosphate. Its pathway is nucleotide-sugar biosynthesis; UDP-N-acetyl-alpha-D-glucosamine biosynthesis; N-acetyl-alpha-D-glucosamine 1-phosphate from alpha-D-glucosamine 6-phosphate (route II): step 2/2. It participates in nucleotide-sugar biosynthesis; UDP-N-acetyl-alpha-D-glucosamine biosynthesis; UDP-N-acetyl-alpha-D-glucosamine from N-acetyl-alpha-D-glucosamine 1-phosphate: step 1/1. The protein operates within bacterial outer membrane biogenesis; LPS lipid A biosynthesis. Catalyzes the last two sequential reactions in the de novo biosynthetic pathway for UDP-N-acetylglucosamine (UDP-GlcNAc). The C-terminal domain catalyzes the transfer of acetyl group from acetyl coenzyme A to glucosamine-1-phosphate (GlcN-1-P) to produce N-acetylglucosamine-1-phosphate (GlcNAc-1-P), which is converted into UDP-GlcNAc by the transfer of uridine 5-monophosphate (from uridine 5-triphosphate), a reaction catalyzed by the N-terminal domain. This is Bifunctional protein GlmU from Xanthomonas axonopodis pv. citri (strain 306).